A 260-amino-acid chain; its full sequence is Large ribosomal subunit protein uL2y (260 aa).

Residues 227-248 are disordered; the sequence is RRDKSAGAKVGQIAARRTGRRR.

It belongs to the universal ribosomal protein uL2 family.

The sequence is that of Large ribosomal subunit protein uL2y (RPL8B) from Arabidopsis thaliana (Mouse-ear cress).